A 429-amino-acid polypeptide reads, in one-letter code: Histidine--tRNA ligase (429 aa).

Belongs to the class-II aminoacyl-tRNA synthetase family. Homodimer.

The protein resides in the cytoplasm. The enzyme catalyses tRNA(His) + L-histidine + ATP = L-histidyl-tRNA(His) + AMP + diphosphate + H(+). This Streptococcus pneumoniae (strain P1031) protein is Histidine--tRNA ligase.